The chain runs to 190 residues: Dynactin subunit 6 (190 aa).

A Phosphothreonine; by CDK1 modification is found at Thr-186.

It belongs to the dynactin subunits 5/6 family. Dynactin subunit 6 subfamily. In terms of assembly, subunit of dynactin, a multiprotein complex part of a tripartite complex with dynein and a adapter, such as BICDL1, BICD2 or HOOK3. The dynactin complex is built around ACTR1A/ACTB filament and consists of an actin-related filament composed of a shoulder domain, a pointed end and a barbed end. Its length is defined by its flexible shoulder domain. The soulder is composed of 2 DCTN1 subunits, 4 DCTN2 and 2 DCTN3. The 4 DCNT2 (via N-terminus) bind the ACTR1A filament and act as molecular rulers to determine the length. The pointed end is important for binding dynein-dynactin cargo adapters. Consists of 4 subunits: ACTR10, DCNT4, DCTN5 and DCTN6. Within the complex DCTN6 forms a heterodimer with DCTN5. The barbed end is composed of a CAPZA1:CAPZB heterodimers, which binds ACTR1A/ACTB filament and dynactin and stabilizes dynactin. Interacts with PLK1. Interacts with N4BP2L1. In terms of processing, phosphorylation at Thr-186 by CDK1 during mitotic prometaphase creates a binding site for PLK1 that facilitates its recruitment to kinetochores.

The protein localises to the cytoplasm. Its subcellular location is the cytoskeleton. It is found in the chromosome. It localises to the centromere. The protein resides in the kinetochore. Part of the dynactin complex that activates the molecular motor dynein for ultra-processive transport along microtubules. The polypeptide is Dynactin subunit 6 (DCTN6) (Pongo abelii (Sumatran orangutan)).